The following is a 1043-amino-acid chain: MEFVRALWLGLALALGPGSAGGHPQPCGVLARLGGSVRLGALLPRAPLARARARAALARAALAPRLPHNLSLELVVAAPPARDPASLTRGLCQALVPPGVAALLAFPEARPELLQLHFLAAATETPVLSLLRREARAPLGAPNPFHLQLHWASPLETLLDVLVAVLQAHAWEDVGLALCRTQDPGGLVALWTSRAGRPPQLVLDLSRRDTGDAGLRARLAPMAAPVGGEAPVPAAVLLGCDIARARRVLEAVPPGPHWLLGTPLPPKALPTAGLPPGLLALGEVARPPLEAAIHDIVQLVARALGSAAQVQPKRALLPAPVNCGDLQPAGPESPGRFLARFLANTSFQGRTGPVWVTGSSQVHMSRHFKVWSLRRDPRGAPAWATVGSWRDGQLDLEPGGASARPPPPQGAQVWPKLRVVTLLEHPFVFARDPDEDGQCPAGQLCLDPGTNDSATLDALFAALANGSAPRALRKCCYGYCIDLLERLAEDTPFDFELYLVGDGKYGALRDGRWTGLVGDLLAGRAHMAVTSFSINSARSQVVDFTSPFFSTSLGIMVRARDTASPIGAFMWPLHWSTWLGVFAALHLTALFLTVYEWRSPYGLTPRGRNRSTVFSYSSALNLCYAILFRRTVSSKTPKCPTGRLLMNLWAIFCLLVLSSYTANLAAVMVGDKTFEELSGIHDPKLHHPAQGFRFGTVWESSAEAYIKKSFPDMHAHMRRHSAPTTPRGVAMLTSDPPKLNAFIMDKSLLDYEVSIDADCKLLTVGKPFAIEGYGIGLPQNSPLTSNLSEFISRYKSSGFIDLLHDKWYKMVPCGKRVFAVTETLQMSIYHFAGLFVLLCLGLGSALLSSLGEHAFFRLALPRIRKGSRLQYWLHTSQKIHRALNTEPPEGSKEETAEAEPSGPEVEQQQQQQDQPTAPEGWKRARRAVDKERRVRFLLEPAVVVAPEADAEAEAAPREGPVWLCSYGRPPAARPTGAPQPGELQELERRIEVARERLRQALVRRGQLLAQLGDSARHRPRRLLQARAAPAEAPPHSGRPGSQE.

The signal sequence occupies residues Met-1–Gly-22. At His-23–His-574 the chain is on the extracellular side. N-linked (GlcNAc...) asparagine glycans are attached at residues Asn-69, Asn-344, Asn-451, and Asn-465. Cystine bridges form between Cys-439-Cys-475 and Cys-445-Cys-476. Positions 531, 533, and 538 each coordinate glycine. D-serine-binding residues include Ser-533 and Arg-538. The helical transmembrane segment at Trp-575–Val-594 threads the bilayer. At Tyr-595 to Ser-615 the chain is on the cytoplasmic side. An intramembrane region (discontinuously helical) is located at residues Tyr-616 to Leu-627. At Phe-628–Thr-641 the chain is on the cytoplasmic side. The helical transmembrane segment at Gly-642 to Thr-661 threads the bilayer. Residues Ala-662–Ala-832 lie on the Extracellular side of the membrane. Residue Ser-701 participates in glycine binding. D-serine contacts are provided by Ser-701, Ala-702, and Asp-745. Asp-745 contacts glycine. An N-linked (GlcNAc...) asparagine glycan is attached at Asn-786. The helical transmembrane segment at Gly-833–Ser-848 threads the bilayer. Over Ser-849 to Glu-1043 the chain is Cytoplasmic. Disordered stretches follow at residues Ala-882 to Ala-924 and Gly-1012 to Glu-1043. The tract at residues Gln-979 to Gly-1012 is involved in the trafficking and surface expression of NMDARs. The segment covering Gln-1024–His-1035 has biased composition (low complexity).

Belongs to the glutamate-gated ion channel (TC 1.A.10.1) family. NR3B/GRIN3B subfamily. In terms of assembly, forms heterotetrameric channels that contain at least two GluN1 subunits and at least a combination of one GluN2 and one GluN3 subunits (in vitro). Forms heterotetrameric channels composed of two GluN1/zeta subunits (GRIN1), and two identical GluN3 subunits (GRIN3A or GRIN3B) (in vitro). Does not form functional homomeric channels.

The protein localises to the cell membrane. It localises to the postsynaptic cell membrane. It carries out the reaction Ca(2+)(in) = Ca(2+)(out). It catalyses the reaction Na(+)(in) = Na(+)(out). Its function is as follows. Component of a non-conventional N-methyl-D-aspartate (NMDA) receptors (NMDARs) that function as heterotetrameric, ligand-gated cation channels with low calcium permeability and low voltage-dependent block by Mg(2+). Forms glutamatergic receptor complexes with GluN1 and GluN2 subunits which are activated by glycine binding to the GluN1 and GluN3 subunits and L-glutamate binding to GluN2 subunits. Forms excitatory glycinergic receptor complexes with GluN1 alone which are activated by glycine binding to the GluN1 and GluN3 subunits. GluN3B subunit also binds D-serine and, in the absence of glycine, activates glycinergic receptor complexes, but with lower efficacy than glycine. Each GluN3 subunit confers differential attributes to channel properties, including activation, deactivation and desensitization kinetics, pH sensitivity, Ca2(+) permeability, and binding to allosteric modulators. This Homo sapiens (Human) protein is Glutamate receptor ionotropic, NMDA 3B.